We begin with the raw amino-acid sequence, 101 residues long: Small ribosomal subunit protein uS14 (101 aa).

It belongs to the universal ribosomal protein uS14 family. As to quaternary structure, part of the 30S ribosomal subunit. Contacts proteins S3 and S10.

Its function is as follows. Binds 16S rRNA, required for the assembly of 30S particles and may also be responsible for determining the conformation of the 16S rRNA at the A site. This is Small ribosomal subunit protein uS14 from Methylobacterium sp. (strain 4-46).